Consider the following 243-residue polypeptide: tRNA (guanine-N(1)-)-methyltransferase (243 aa).

Residues G123 and 143–148 (LGDFVM) contribute to the S-adenosyl-L-methionine site.

This sequence belongs to the RNA methyltransferase TrmD family. As to quaternary structure, homodimer.

Its subcellular location is the cytoplasm. It catalyses the reaction guanosine(37) in tRNA + S-adenosyl-L-methionine = N(1)-methylguanosine(37) in tRNA + S-adenosyl-L-homocysteine + H(+). Its function is as follows. Specifically methylates guanosine-37 in various tRNAs. This Ruegeria pomeroyi (strain ATCC 700808 / DSM 15171 / DSS-3) (Silicibacter pomeroyi) protein is tRNA (guanine-N(1)-)-methyltransferase.